We begin with the raw amino-acid sequence, 343 residues long: Multidrug resistance protein MdtN (343 aa).

At 1–12 the chain is on the cytoplasmic side; it reads MESTPKKAPRSK. Residues 13 to 33 traverse the membrane as a helical; Signal-anchor for type II membrane protein segment; that stretch reads FPALLVVALALVALVFVIWRV. The Periplasmic segment spans residues 34–343; it reads DSAPSTNDAY…ASAVANLEPQ (310 aa).

The protein belongs to the membrane fusion protein (MFP) (TC 8.A.1) family. Could be part of a tripartite efflux system composed of MdtN, MdtO and MdtP.

The protein resides in the cell inner membrane. Its function is as follows. Could be involved in resistance to puromycin, acriflavine and tetraphenylarsonium chloride. The sequence is that of Multidrug resistance protein MdtN (mdtN) from Shigella flexneri.